The following is a 379-amino-acid chain: Acetylornithine aminotransferase (379 aa).

Pyridoxal 5'-phosphate contacts are provided by residues 93–94 (GA) and F120. N(2)-acetyl-L-ornithine is bound at residue R123. 205–208 (DEVQ) lines the pyridoxal 5'-phosphate pocket. K234 carries the N6-(pyridoxal phosphate)lysine modification. Residue S262 coordinates N(2)-acetyl-L-ornithine. A pyridoxal 5'-phosphate-binding site is contributed by T263.

Belongs to the class-III pyridoxal-phosphate-dependent aminotransferase family. ArgD subfamily. Homodimer. Pyridoxal 5'-phosphate serves as cofactor.

The protein resides in the cytoplasm. The catalysed reaction is N(2)-acetyl-L-ornithine + 2-oxoglutarate = N-acetyl-L-glutamate 5-semialdehyde + L-glutamate. The protein operates within amino-acid biosynthesis; L-arginine biosynthesis; N(2)-acetyl-L-ornithine from L-glutamate: step 4/4. This is Acetylornithine aminotransferase from Streptococcus mutans serotype c (strain ATCC 700610 / UA159).